Consider the following 209-residue polypeptide: tRNA (guanine-N(7)-)-methyltransferase (209 aa).

S-adenosyl-L-methionine-binding residues include Glu40, Glu65, and Asp114. Asp114 is an active-site residue. Residues Asp150 and 188–191 each bind substrate; that span reads TAFE.

This sequence belongs to the class I-like SAM-binding methyltransferase superfamily. TrmB family.

It catalyses the reaction guanosine(46) in tRNA + S-adenosyl-L-methionine = N(7)-methylguanosine(46) in tRNA + S-adenosyl-L-homocysteine. The protein operates within tRNA modification; N(7)-methylguanine-tRNA biosynthesis. Catalyzes the formation of N(7)-methylguanine at position 46 (m7G46) in tRNA. The sequence is that of tRNA (guanine-N(7)-)-methyltransferase from Bdellovibrio bacteriovorus (strain ATCC 15356 / DSM 50701 / NCIMB 9529 / HD100).